Consider the following 30-residue polypeptide: Cyclotide hyen-C (30 aa).

The segment at residues 1 to 30 (GTHPCQETCVTSTRCSTQGCHCNWPICFKN) is a cross-link (cyclopeptide (Gly-Asn)). 3 disulfides stabilise this stretch: Cys5–Cys20, Cys9–Cys22, and Cys15–Cys27.

Post-translationally, this is a cyclic peptide. In terms of tissue distribution, detected in stems (at protein level).

Probably participates in a plant defense mechanism. Does not display any cytotoxic activity towards K562, HeLa, MCF-7, HUVEC or red blood cells. Does not bind to phospholipd membranes containing 1-palmitoyl 2-oleoyl phosphatidylcholine (POPC) or 1-palmitoyl-2-oleophosphatidylethanolamine (POPE). The protein is Cyclotide hyen-C of Pigea enneasperma (Spade flower).